A 401-amino-acid chain; its full sequence is F-box protein At1g69090 (401 aa).

Residues 1–23 are disordered; the sequence is MASPTLALAQSPPPKSPAVSVSQ. Positions 27-74 constitute an F-box domain; the sequence is HCWSKLPLDLMQLVFERLAFLDFERAKSVCSSWQFGSKQSKPNNQIPW.

In Arabidopsis thaliana (Mouse-ear cress), this protein is F-box protein At1g69090.